A 514-amino-acid polypeptide reads, in one-letter code: Serine--tRNA ligase, cytoplasmic (514 aa).

Position 1 is an N-acetylmethionine (methionine 1). Residues 9 to 61 (RVDKGGDPALIRETQEKRFKDPGLVDQLVKADSEWRRCRFRADNLNKLKNLCS) are interaction with tRNA. Residue serine 241 is modified to Phosphoserine. L-serine is bound by residues threonine 271 and arginine 302. Residues 302–304 (RQE) and 318–321 (VHQF) contribute to the ATP site. Lysine 323 carries the post-translational modification N6-acetyllysine. Glutamate 325 is a binding site for L-serine. An ATP-binding site is contributed by 391 to 394 (ELVS). Asparagine 427 contributes to the L-serine binding site. Residues 471–514 (VKPAPIDQEPSKKQKKQHEGSKKKAAARDVALESRLQNMEVTDA) are disordered. The segment covering 479-502 (EPSKKQKKQHEGSKKKAAARDVAL) has biased composition (basic and acidic residues). The short motif at 482–494 (KKQKKQHEGSKKK) is the Nuclear localization signal element. Polar residues predominate over residues 505-514 (RLQNMEVTDA).

The protein belongs to the class-II aminoacyl-tRNA synthetase family. Type-1 seryl-tRNA synthetase subfamily. As to quaternary structure, homodimer. The tRNA molecule may bind across the dimer. Interacts with SIRT2. Interacts with METTL6; interaction is required for the tRNA N(3)-methylcytidine methyltransferase activity of METTL6.

It is found in the cytoplasm. It localises to the nucleus. It catalyses the reaction tRNA(Ser) + L-serine + ATP = L-seryl-tRNA(Ser) + AMP + diphosphate + H(+). It carries out the reaction tRNA(Sec) + L-serine + ATP = L-seryl-tRNA(Sec) + AMP + diphosphate + H(+). It participates in aminoacyl-tRNA biosynthesis; selenocysteinyl-tRNA(Sec) biosynthesis; L-seryl-tRNA(Sec) from L-serine and tRNA(Sec): step 1/1. Its function is as follows. Catalyzes the attachment of serine to tRNA(Ser) in a two-step reaction: serine is first activated by ATP to form Ser-AMP and then transferred to the acceptor end of tRNA(Ser). Is probably also able to aminoacylate tRNA(Sec) with serine, to form the misacylated tRNA L-seryl-tRNA(Sec), which will be further converted into selenocysteinyl-tRNA(Sec). In the nucleus, binds to the VEGFA core promoter and prevents MYC binding and transcriptional activation by MYC. Recruits SIRT2 to the VEGFA promoter, promoting deacetylation of histone H4 at 'Lys-16' (H4K16). Thereby, inhibits the production of VEGFA and sprouting angiogenesis mediated by VEGFA. The chain is Serine--tRNA ligase, cytoplasmic (SARS1) from Macaca fascicularis (Crab-eating macaque).